A 770-amino-acid chain; its full sequence is DNA topoisomerase 1 (770 aa).

In terms of domain architecture, Toprim spans 4–140 (FRIIIAEKAD…EIRRAKFSAL (137 aa)). Residues E10 and D109 each contribute to the Mg(2+) site. The Topo IA-type catalytic domain maps to 156–563 (NYSLADAADA…ESKKMLHEVL (408 aa)). Residues 194-199 (SAGRVQ) are interaction with DNA. The active-site O-(5'-phospho-DNA)-tyrosine intermediate is Y312. 3 consecutive C4-type zinc fingers follow at residues 611–638 (CEDP…CPVC), 673–700 (CPAD…YPKC), and 719–744 (CPYC…NMQC).

It belongs to the type IA topoisomerase family. Monomer. Mg(2+) is required as a cofactor.

The catalysed reaction is ATP-independent breakage of single-stranded DNA, followed by passage and rejoining.. Functionally, releases the supercoiling and torsional tension of DNA, which is introduced during the DNA replication and transcription, by transiently cleaving and rejoining one strand of the DNA duplex. Introduces a single-strand break via transesterification at a target site in duplex DNA. The scissile phosphodiester is attacked by the catalytic tyrosine of the enzyme, resulting in the formation of a DNA-(5'-phosphotyrosyl)-enzyme intermediate and the expulsion of a 3'-OH DNA strand. The free DNA strand then undergoes passage around the unbroken strand, thus removing DNA supercoils. Finally, in the religation step, the DNA 3'-OH attacks the covalent intermediate to expel the active-site tyrosine and restore the DNA phosphodiester backbone. The protein is DNA topoisomerase 1 of Thermoplasma acidophilum (strain ATCC 25905 / DSM 1728 / JCM 9062 / NBRC 15155 / AMRC-C165).